A 333-amino-acid chain; its full sequence is Thiamine-monophosphate kinase (333 aa).

Residues Asp44, Ser58, Thr59, and Asp60 each contribute to the Mg(2+) site. Residue His67 participates in substrate binding. 2 residues coordinate Mg(2+): Asp89 and Asp137. ATP contacts are provided by residues Gly136–Asp137 and Arg162. Asp224 contacts Mg(2+). Ser226 contacts ATP. Mg(2+) is bound at residue Asp227. Residues Glu278 and Trp320 each contribute to the substrate site.

Belongs to the thiamine-monophosphate kinase family.

It catalyses the reaction thiamine phosphate + ATP = thiamine diphosphate + ADP. The protein operates within cofactor biosynthesis; thiamine diphosphate biosynthesis; thiamine diphosphate from thiamine phosphate: step 1/1. Catalyzes the ATP-dependent phosphorylation of thiamine-monophosphate (TMP) to form thiamine-pyrophosphate (TPP), the active form of vitamin B1. The chain is Thiamine-monophosphate kinase from Mycobacterium tuberculosis (strain CDC 1551 / Oshkosh).